A 315-amino-acid polypeptide reads, in one-letter code: Aspartate carbamoyltransferase catalytic subunit (315 aa).

The carbamoyl phosphate site is built by arginine 65 and threonine 66. Position 93 (lysine 93) interacts with L-aspartate. Arginine 115, histidine 145, and glutamine 148 together coordinate carbamoyl phosphate. Residues arginine 179 and arginine 234 each coordinate L-aspartate. Residues glycine 275 and proline 276 each contribute to the carbamoyl phosphate site.

Belongs to the aspartate/ornithine carbamoyltransferase superfamily. ATCase family. As to quaternary structure, heterododecamer (2C3:3R2) of six catalytic PyrB chains organized as two trimers (C3), and six regulatory PyrI chains organized as three dimers (R2).

The catalysed reaction is carbamoyl phosphate + L-aspartate = N-carbamoyl-L-aspartate + phosphate + H(+). It functions in the pathway pyrimidine metabolism; UMP biosynthesis via de novo pathway; (S)-dihydroorotate from bicarbonate: step 2/3. In terms of biological role, catalyzes the condensation of carbamoyl phosphate and aspartate to form carbamoyl aspartate and inorganic phosphate, the committed step in the de novo pyrimidine nucleotide biosynthesis pathway. The polypeptide is Aspartate carbamoyltransferase catalytic subunit (Xanthomonas oryzae pv. oryzae (strain MAFF 311018)).